Consider the following 258-residue polypeptide: tRNA pseudouridine synthase A (258 aa).

Residue Asp53 is the Nucleophile of the active site. Substrate is bound at residue Tyr111.

This sequence belongs to the tRNA pseudouridine synthase TruA family. In terms of assembly, homodimer.

The enzyme catalyses uridine(38/39/40) in tRNA = pseudouridine(38/39/40) in tRNA. Formation of pseudouridine at positions 38, 39 and 40 in the anticodon stem and loop of transfer RNAs. This Streptococcus agalactiae serotype III (strain NEM316) protein is tRNA pseudouridine synthase A.